The chain runs to 378 residues: Putative F-box protein At5g51000 (378 aa).

Positions 1-47 constitute an F-box domain; the sequence is MSTMSDLFPDLVEEILSRVPITSLKAVKLTCKQWNDLSKDSSFTKNH.

The polypeptide is Putative F-box protein At5g51000 (Arabidopsis thaliana (Mouse-ear cress)).